Here is a 154-residue protein sequence, read N- to C-terminus: Urease accessory protein UreE (154 aa).

The segment at 135-154 (YGHGRTFGHDHGHAHDHHHA) is disordered.

It belongs to the UreE family.

It is found in the cytoplasm. Involved in urease metallocenter assembly. Binds nickel. Probably functions as a nickel donor during metallocenter assembly. This is Urease accessory protein UreE from Paracoccus denitrificans (strain Pd 1222).